Reading from the N-terminus, the 406-residue chain is Arginine deiminase (406 aa).

Cysteine 396 functions as the Amidino-cysteine intermediate in the catalytic mechanism.

Belongs to the arginine deiminase family.

The protein localises to the cytoplasm. It catalyses the reaction L-arginine + H2O = L-citrulline + NH4(+). The protein operates within amino-acid degradation; L-arginine degradation via ADI pathway; carbamoyl phosphate from L-arginine: step 1/2. In Aliivibrio fischeri (strain MJ11) (Vibrio fischeri), this protein is Arginine deiminase.